The primary structure comprises 78 residues: uncharacterized protein (78 aa).

2 helical membrane-spanning segments follow: residues 7 to 27 (ICLVLTIIGAINWGLIGFFQF) and 41 to 61 (LSRIIYGLVGIAGLINLGLLF).

Its subcellular location is the cell membrane. This is an uncharacterized protein from Bacillus subtilis (strain 168).